Here is a 93-residue protein sequence, read N- to C-terminus: uncharacterized protein (93 aa).

This sequence belongs to the BolA/IbaG family.

This is an uncharacterized protein from Sinorhizobium sp.